The primary structure comprises 842 residues: Protein P (842 aa).

The segment at 1–177 (MPLSYQHFRR…FCGSPYSWEQ (177 aa)) is terminal protein domain (TP). Positions 178–345 (ELHHGAFLDG…YCLTHLVNLL (168 aa)) are spacer. The tract at residues 205–271 (SRPPVGSSIQ…RHAKNIASRP (67 aa)) is disordered. Residues 223-239 (GPQSQQRPLDGSQQGRS) are compositionally biased toward polar residues. A polymerase/reverse transcriptase domain (RT) region spans residues 346-689 (EDWGPCTEHG…YLNLYPVARQ (344 aa)). Positions 356–599 (KHHIRIPRTP…YSLNFMGYVI (244 aa)) constitute a Reverse transcriptase domain. Mg(2+) contacts are provided by Asp428, Asp550, and Asp551.

Belongs to the hepadnaviridae P protein family.

The enzyme catalyses DNA(n) + a 2'-deoxyribonucleoside 5'-triphosphate = DNA(n+1) + diphosphate. The catalysed reaction is Endonucleolytic cleavage to 5'-phosphomonoester.. Its activity is regulated as follows. Activated by host HSP70 and HSP40 in vitro to be able to bind the epsilon loop of the pgRNA. Because deletion of the RNase H region renders the protein partly chaperone-independent, the chaperones may be needed indirectly to relieve occlusion of the RNA-binding site by this domain. Inhibited by several reverse-transcriptase inhibitors: Lamivudine, Adefovir and Entecavir. Multifunctional enzyme that converts the viral RNA genome into dsDNA in viral cytoplasmic capsids. This enzyme displays a DNA polymerase activity that can copy either DNA or RNA templates, and a ribonuclease H (RNase H) activity that cleaves the RNA strand of RNA-DNA heteroduplexes in a partially processive 3'- to 5'-endonucleasic mode. Neo-synthesized pregenomic RNA (pgRNA) are encapsidated together with the P protein, and reverse-transcribed inside the nucleocapsid. Initiation of reverse-transcription occurs first by binding the epsilon loop on the pgRNA genome, and is initiated by protein priming, thereby the 5'-end of (-)DNA is covalently linked to P protein. Partial (+)DNA is synthesized from the (-)DNA template and generates the relaxed circular DNA (RC-DNA) genome. After budding and infection, the RC-DNA migrates in the nucleus, and is converted into a plasmid-like covalently closed circular DNA (cccDNA). The activity of P protein does not seem to be necessary for cccDNA generation, and is presumably released from (+)DNA by host nuclear DNA repair machinery. In Hepatitis B virus genotype E subtype ayw4 (isolate Kou) (HBV-E), this protein is Protein P.